We begin with the raw amino-acid sequence, 176 residues long: Large ribosomal subunit protein uL6 (176 aa).

It belongs to the universal ribosomal protein uL6 family. As to quaternary structure, part of the 50S ribosomal subunit.

Functionally, this protein binds to the 23S rRNA, and is important in its secondary structure. It is located near the subunit interface in the base of the L7/L12 stalk, and near the tRNA binding site of the peptidyltransferase center. This is Large ribosomal subunit protein uL6 from Lactobacillus delbrueckii subsp. bulgaricus (strain ATCC 11842 / DSM 20081 / BCRC 10696 / JCM 1002 / NBRC 13953 / NCIMB 11778 / NCTC 12712 / WDCM 00102 / Lb 14).